The chain runs to 502 residues: Cardiolipin synthase (502 aa).

Transmembrane regions (helical) follow at residues 7-27, 29-49, and 59-79; these read VIIFVLAVAAFLFLTNDYWEG, LLGGLSILISCSVVFIAFVIS, and ITWLVVLGSFPLIGFFFYLMF. PLD phosphodiesterase domains are found at residues 237–264 and 415–442; these read INFRNHRKIIVIDGTIGFVGGLNIGDEY and SKGFLHSKIMIVDGELASIGTANMDMRS. Catalysis depends on residues His242, Lys244, Asp249, His420, Lys422, and Asp427.

The protein belongs to the phospholipase D family. Cardiolipin synthase subfamily.

Its subcellular location is the cell membrane. It carries out the reaction 2 a 1,2-diacyl-sn-glycero-3-phospho-(1'-sn-glycerol) = a cardiolipin + glycerol. Catalyzes the reversible phosphatidyl group transfer from one phosphatidylglycerol molecule to another to form cardiolipin (CL) (diphosphatidylglycerol) and glycerol. In Geobacillus sp. (strain WCH70), this protein is Cardiolipin synthase (cls).